Reading from the N-terminus, the 438-residue chain is MGKPIVAIVGRPNVGKSTLFNKLAGKRIAIVDDMPGVTRDRIYAEAEWLNNNFTIIDTGGIEPENDDIIVAQMRRQAQLAIEMADVVLFIVDGKQGLTDADREVAHMLRKASKSIVLAVNKIDRRQLDDNIYEFYNLGLGDPMPISASQGLGLGDLLDEVIEKFPEGNVEEEEDEYIRIAMIGRPNVGKSSLINKILGEEKHIVSNIPGTTRDAVDSYVETEEGKFVLIDTAGLRRKSKIKEQVERYSAVRTLASIENADVCILMIDATEDIAEQDERIIGYAHEINKAILVIVNKWDLIEKDDKTMKNFKDKLRTKLSFLPYASFLFISAKTGQRVHKVLGMAKECYGNYCKRIKTGILNDIINKAVLMKEPPVMGTRRLKIYYVTQIGTKPPTFVFFVNDPELLHFSYRRYLENKLRESFDFSGTGIKLEFRERKE.

EngA-type G domains follow at residues 4 to 168 (PIVA…PEGN) and 177 to 352 (IRIA…GNYC). Residues 10–17 (GRPNVGKS), 57–61 (DTGGI), 120–123 (NKID), 183–190 (GRPNVGKS), 230–234 (DTAGL), and 295–298 (NKWD) contribute to the GTP site. A KH-like domain is found at 353 to 437 (KRIKTGILND…GIKLEFRERK (85 aa)).

It belongs to the TRAFAC class TrmE-Era-EngA-EngB-Septin-like GTPase superfamily. EngA (Der) GTPase family. Associates with the 50S ribosomal subunit.

Its function is as follows. GTPase that plays an essential role in the late steps of ribosome biogenesis. The chain is GTPase Der from Clostridium novyi (strain NT).